We begin with the raw amino-acid sequence, 557 residues long: Ribonuclease J 2 (557 aa).

Zn(2+) contacts are provided by His76, His78, His144, and Glu166. Substrate is bound at residue 366-370 (HASSH).

The protein belongs to the metallo-beta-lactamase superfamily. RNA-metabolizing metallo-beta-lactamase-like family. Bacterial RNase J subfamily. In terms of assembly, homodimer. Component of a possible RNA degradosome complex composed of cshA, eno, pfkA, pnp, rnjA, rnjB, rnpA and rny. Interacts specifically with RNase J1. Zn(2+) serves as cofactor.

The protein localises to the cytoplasm. An RNase that has 5'-3' exonuclease and endonuclease activity, with the exonuclease activity probably being most important in vivo. Involved in maturation of 16S rRNA, rnpB (the RNA component of RNase P) maturation and degradation, and mRNA maturation and/or decay. This subunit probably plays a structural rather than enzymatic role as mutation of its putative active site gives no phenotype, and its deletion is partially complemented by inactive RNase J1. This Staphylococcus aureus (strain NCTC 8325 / PS 47) protein is Ribonuclease J 2.